Consider the following 203-residue polypeptide: Guanylate kinase (203 aa).

The Guanylate kinase-like domain occupies 3 to 181 (GTLYVVSAPS…TLADLQAIFT (179 aa)). Position 10–17 (10–17 (APSGAGKT)) interacts with ATP.

The protein belongs to the guanylate kinase family.

It is found in the cytoplasm. The catalysed reaction is GMP + ATP = GDP + ADP. Essential for recycling GMP and indirectly, cGMP. This chain is Guanylate kinase, found in Alkalilimnicola ehrlichii (strain ATCC BAA-1101 / DSM 17681 / MLHE-1).